Reading from the N-terminus, the 1021-residue chain is Ephrin type-B receptor 6 (1021 aa).

Positions 1-31 are cleaved as a signal peptide; that stretch reads MATEGAAQLGNRVAGMVCSLWVLLLVSSVLA. Residues 32 to 594 are Extracellular-facing; the sequence is LEEVLLDTTG…LSSQLPERLS (563 aa). The region spanning 33–237 is the Eph LBD domain; that stretch reads EEVLLDTTGE…FSYTCPAVLR (205 aa). Residues 163–182 are disordered; that stretch reads SFPSSSSSSSSSSSAAWAVG. Residues 166 to 176 are compositionally biased toward low complexity; sequence SSSSSSSSSSS. Fibronectin type-III domains follow at residues 369–486 and 487–582; these read PPSA…TSHE and VPSA…TLPQ. N480 is a glycosylation site (N-linked (GlcNAc...) asparagine). A helical membrane pass occupies residues 595-615; it reads LVIGSILGALAFLLLAAITVL. The Cytoplasmic portion of the chain corresponds to 616-1021; the sequence is AVVFQRKRRG…HLRQQGSVEV (406 aa). The Protein kinase domain occupies 670–919; it reads IKIEEVIGTG…QLVAAFDKMI (250 aa). Position 676-684 (676-684) interacts with ATP; the sequence is IGTGSFGEV. The SAM domain maps to 948-1012; sequence PCLDSPQAWL…LHHIQLLQQH (65 aa). The PDZ-binding motif lies at 1019 to 1021; sequence VEV.

The protein belongs to the protein kinase superfamily. Tyr protein kinase family. Ephrin receptor subfamily. Interacts with CBL and EPHB1. Interacts with FYN; this interaction takes place in a ligand-independent manner. Post-translationally, ligand-binding increases phosphorylation on tyrosine residues. Phosphorylation on tyrosine residues is mediated by transphosphorylation by the catalytically active EPHB1 in a ligand-independent manner. Tyrosine phosphorylation of the receptor may act as a switch on the functional transition from cell adhesion/attraction to de-adhesion/repulsion. In terms of tissue distribution, expressed in brain. Expressed in non invasive breast carcinoma cell lines (at protein level). Strong expression in brain and pancreas, and weak expression in other tissues, such as heart, placenta, lung, liver, skeletal muscle and kidney. Expressed in breast non invasive tumors but not in metastatic lesions. Isoform 3 is expressed in cell lines of glioblastomas, anaplastic astrocytomas, gliosarcomas and astrocytomas. Isoform 3 is not detected in normal tissues.

It localises to the membrane. The protein resides in the secreted. In terms of biological role, kinase-defective receptor for members of the ephrin-B family. Binds to ephrin-B1 and ephrin-B2. Modulates cell adhesion and migration by exerting both positive and negative effects upon stimulation with ephrin-B2. Inhibits JNK activation, T-cell receptor-induced IL-2 secretion and CD25 expression upon stimulation with ephrin-B2. This Homo sapiens (Human) protein is Ephrin type-B receptor 6 (EPHB6).